We begin with the raw amino-acid sequence, 320 residues long: Cytosolic Fe-S cluster assembly factor NUBP1 (320 aa).

Position 1 is an N-acetylmethionine (Met-1). [4Fe-4S] cluster contacts are provided by Cys-8, Cys-22, Cys-25, and Cys-31. ATP is bound at residue 62–69 (GKGGVGKS). The [4Fe-4S] cluster site is built by Cys-235 and Cys-238.

It belongs to the Mrp/NBP35 ATP-binding proteins family. NUBP1/NBP35 subfamily. Heterotetramer of 2 NUBP1 and 2 NUBP2 chains. Interacts with KIFC1. Interacts with the BBS/CCT complex subunit CCT1. [4Fe-4S] cluster serves as cofactor.

It localises to the cytoplasm. The protein resides in the nucleus. It is found in the cell projection. Its subcellular location is the cytoskeleton. The protein localises to the cilium axoneme. It localises to the cilium basal body. The protein resides in the microtubule organizing center. It is found in the centrosome. Its subcellular location is the centriole. In terms of biological role, component of the cytosolic iron-sulfur (Fe/S) protein assembly (CIA) machinery. Required for maturation of extramitochondrial Fe-S proteins. The NUBP1-NUBP2 heterotetramer forms a Fe-S scaffold complex, mediating the de novo assembly of an Fe-S cluster and its transfer to target apoproteins. Implicated in the regulation of centrosome duplication. Negatively regulates cilium formation and structure. The chain is Cytosolic Fe-S cluster assembly factor NUBP1 from Bos taurus (Bovine).